The primary structure comprises 465 residues: Gamma-aminobutyric acid receptor subunit gamma-1 (465 aa).

The N-terminal stretch at 1–35 (MGPLKAFLFSPFLLRSQSRGVRLVFLLLTLHLGNC) is a signal peptide. Residues 36–273 (VDKADDEDDE…FDLSRRMGYF (238 aa)) are Extracellular-facing. Residues Asn-50 and Asn-127 are each glycosylated (N-linked (GlcNAc...) asparagine). Cys-188 and Cys-202 are oxidised to a cystine. An N-linked (GlcNAc...) asparagine glycan is attached at Asn-245. Residues 274 to 294 (TIQTYIPCILTVVLSWVSFWI) form a helical membrane-spanning segment. The Cytoplasmic portion of the chain corresponds to 295–300 (NKDAVP). Residues 301-320 (ARTSLGITTVLTMTTLSTIA) traverse the membrane as a helical segment. At 321–328 (RKSLPKVS) the chain is on the extracellular side. Residues 329 to 349 (YVTAMDLFVSVCFIFVFAALM) form a helical membrane-spanning segment. Residues 350 to 444 (EYGTLHYFTS…RIAKIDSYSR (95 aa)) are Cytoplasmic-facing. The chain crosses the membrane as a helical span at residues 445–465 (IFFPTAFALFNLVYWVGYLYL).

This sequence belongs to the ligand-gated ion channel (TC 1.A.9) family. Gamma-aminobutyric acid receptor (TC 1.A.9.5) subfamily. GABRG1 sub-subfamily. In terms of assembly, heteropentamer, formed by a combination of alpha (GABRA1-6), beta (GABRB1-3), gamma (GABRG1-3), delta (GABRD), epsilon (GABRE), rho (GABRR1-3), pi (GABRP) and theta (GABRQ) chains, each subunit exhibiting distinct physiological and pharmacological properties. Post-translationally, may be palmitoylated.

The protein resides in the postsynaptic cell membrane. The protein localises to the cell membrane. The catalysed reaction is chloride(in) = chloride(out). Gamma subunit of the heteropentameric ligand-gated chloride channel gated by gamma-aminobutyric acid (GABA), a major inhibitory neurotransmitter in the brain. GABA-gated chloride channels, also named GABA(A) receptors (GABAAR), consist of five subunits arranged around a central pore and contain GABA active binding site(s) located at the alpha and beta subunit interface(s). When activated by GABA, GABAARs selectively allow the flow of chloride anions across the cell membrane down their electrochemical gradient. Chloride influx into the postsynaptic neuron following GABAAR opening decreases the neuron ability to generate a new action potential, thereby reducing nerve transmission. This Homo sapiens (Human) protein is Gamma-aminobutyric acid receptor subunit gamma-1.